A 187-amino-acid chain; its full sequence is Casparian strip membrane protein 1 (187 aa).

Residues 1–10 are compositionally biased toward basic and acidic residues; the sequence is MKGSSEHGET. The interval 1 to 20 is disordered; sequence MKGSSEHGETSKQAPLGSSR. The Cytoplasmic portion of the chain corresponds to 1–27; that stretch reads MKGSSEHGETSKQAPLGSSRGVSKGVS. Residues 28–48 form a helical membrane-spanning segment; sequence VLDLILRFIAIIGTLASAIAM. The Extracellular portion of the chain corresponds to 49 to 75; sequence GTTNETLPFFTQFIRFKAQYSDLPTLT. The N-linked (GlcNAc...) asparagine glycan is linked to Asn-52. Residues 76–96 traverse the membrane as a helical segment; the sequence is FFVVANSIVCAYLTLSLPLSI. Over 97 to 115 the chain is Cytoplasmic; that stretch reads VHIIRSRAKYSRLLLVVLD. A helical transmembrane segment spans residues 116–136; sequence AAMLALVTPGASAAAAIVYLA. Residues 137–162 lie on the Extracellular side of the membrane; sequence HKGNVRANWLAICQQFDSFCERISGC. A helical membrane pass occupies residues 163-183; that stretch reads LIGSFGAMVMLVLLLLLSAIA. Residues 184–187 lie on the Cytoplasmic side of the membrane; the sequence is LARR.

This sequence belongs to the Casparian strip membrane proteins (CASP) family. Homodimer and heterodimers.

The protein resides in the cell membrane. Regulates membrane-cell wall junctions and localized cell wall deposition. Required for establishment of the Casparian strip membrane domain (CSD) and the subsequent formation of Casparian strips, a cell wall modification of the root endodermis that determines an apoplastic barrier between the intraorganismal apoplasm and the extraorganismal apoplasm and prevents lateral diffusion. The protein is Casparian strip membrane protein 1 of Zea mays (Maize).